Here is a 427-residue protein sequence, read N- to C-terminus: Adenylosuccinate synthetase (427 aa).

Residues 12 to 18 (GDEGKGK) and 40 to 42 (GHT) contribute to the GTP site. The active-site Proton acceptor is D13. The Mg(2+) site is built by D13 and G40. IMP contacts are provided by residues 13-16 (DEGK), 38-41 (NAGH), T128, R142, Q223, T238, and R302. H41 serves as the catalytic Proton donor. Position 298 to 304 (298 to 304 (VTTGRDR)) interacts with substrate. Residues R304, 330–332 (KLD), and 412–414 (GVG) each bind GTP.

Belongs to the adenylosuccinate synthetase family. In terms of assembly, homodimer. It depends on Mg(2+) as a cofactor.

Its subcellular location is the cytoplasm. The catalysed reaction is IMP + L-aspartate + GTP = N(6)-(1,2-dicarboxyethyl)-AMP + GDP + phosphate + 2 H(+). It functions in the pathway purine metabolism; AMP biosynthesis via de novo pathway; AMP from IMP: step 1/2. In terms of biological role, plays an important role in the de novo pathway of purine nucleotide biosynthesis. Catalyzes the first committed step in the biosynthesis of AMP from IMP. This Streptomyces coelicolor (strain ATCC BAA-471 / A3(2) / M145) protein is Adenylosuccinate synthetase.